A 231-amino-acid polypeptide reads, in one-letter code: Deoxyribose-phosphate aldolase (231 aa).

The Proton donor/acceptor role is filled by Asp-97. The active-site Schiff-base intermediate with acetaldehyde is the Lys-162. Lys-191 functions as the Proton donor/acceptor in the catalytic mechanism.

The protein belongs to the DeoC/FbaB aldolase family. DeoC type 1 subfamily.

The protein localises to the cytoplasm. The enzyme catalyses 2-deoxy-D-ribose 5-phosphate = D-glyceraldehyde 3-phosphate + acetaldehyde. Its pathway is carbohydrate degradation; 2-deoxy-D-ribose 1-phosphate degradation; D-glyceraldehyde 3-phosphate and acetaldehyde from 2-deoxy-alpha-D-ribose 1-phosphate: step 2/2. Functionally, catalyzes a reversible aldol reaction between acetaldehyde and D-glyceraldehyde 3-phosphate to generate 2-deoxy-D-ribose 5-phosphate. The protein is Deoxyribose-phosphate aldolase of Caldanaerobacter subterraneus subsp. tengcongensis (strain DSM 15242 / JCM 11007 / NBRC 100824 / MB4) (Thermoanaerobacter tengcongensis).